Consider the following 152-residue polypeptide: Deoxyuridine 5'-triphosphate nucleotidohydrolase (152 aa).

Residues Arg-71–Gly-73, Asn-84, Leu-88–Asp-90, and Met-98 contribute to the substrate site.

This sequence belongs to the dUTPase family. The cofactor is Mg(2+).

It carries out the reaction dUTP + H2O = dUMP + diphosphate + H(+). Its pathway is pyrimidine metabolism; dUMP biosynthesis; dUMP from dCTP (dUTP route): step 2/2. This enzyme is involved in nucleotide metabolism: it produces dUMP, the immediate precursor of thymidine nucleotides and it decreases the intracellular concentration of dUTP so that uracil cannot be incorporated into DNA. The polypeptide is Deoxyuridine 5'-triphosphate nucleotidohydrolase (Shewanella baltica (strain OS185)).